We begin with the raw amino-acid sequence, 554 residues long: Arginine--tRNA ligase (554 aa).

The 'HIGH' region motif lies at 129-139 (ANPTGPLHIGH).

The protein belongs to the class-I aminoacyl-tRNA synthetase family. In terms of assembly, monomer.

The protein localises to the cytoplasm. The enzyme catalyses tRNA(Arg) + L-arginine + ATP = L-arginyl-tRNA(Arg) + AMP + diphosphate. The polypeptide is Arginine--tRNA ligase (Citrifermentans bemidjiense (strain ATCC BAA-1014 / DSM 16622 / JCM 12645 / Bem) (Geobacter bemidjiensis)).